A 65-amino-acid polypeptide reads, in one-letter code: Oxiana weak toxin (65 aa).

Disulfide bonds link Cys3/Cys24, Cys6/Cys11, Cys17/Cys42, Cys46/Cys57, and Cys58/Cys63.

Belongs to the three-finger toxin family. Ancestral subfamily. Orphan group II sub-subfamily. Expressed by the venom gland.

The protein resides in the secreted. Functionally, binds to muscle and neuronal nicotinic acetylcholine receptors (nAChR). It binds to extracellular domain of rat alpha-7/CHRNA7 nAChR (IC(50)=2.2 uM) and to Torpedo californica membranes (IC(50)=30 uM). The chain is Oxiana weak toxin from Naja oxiana (Central Asian cobra).